Consider the following 89-residue polypeptide: Putative antitoxin VapB42 (89 aa).

Its function is as follows. Possibly the antitoxin component of a type II toxin-antitoxin (TA) system. Its cognate toxin is VapC42 (Potential). The sequence is that of Putative antitoxin VapB42 (vapB42) from Mycobacterium tuberculosis (strain CDC 1551 / Oshkosh).